A 261-amino-acid polypeptide reads, in one-letter code: Thiamine thiazole synthase (261 aa).

NAD(+) contacts are provided by residues alanine 33, 52–53 (ER), glycine 60, valine 124, and 152–154 (HVD). Residues aspartate 154 and histidine 169 each contribute to the Fe cation site. Residue isoleucine 219 coordinates NAD(+). Arginine 229 lines the glycine pocket.

This sequence belongs to the THI4 family. As to quaternary structure, homooctamer; tetramer of dimers. Requires Fe(2+) as cofactor.

The enzyme catalyses hydrogen sulfide + glycine + NAD(+) = ADP-5-ethyl-4-methylthiazole-2-carboxylate + nicotinamide + 3 H2O + H(+). It participates in cofactor biosynthesis; thiamine diphosphate biosynthesis. Functionally, involved in the biosynthesis of the thiazole moiety of thiamine. Catalyzes the conversion of NAD and glycine to adenosine diphosphate 5-(2-hydroxyethyl)-4-methylthiazole-2-carboxylate (ADT), an adenylated thiazole intermediate, using free sulfide as a source of sulfur. This chain is Thiamine thiazole synthase, found in Pyrobaculum calidifontis (strain DSM 21063 / JCM 11548 / VA1).